Consider the following 287-residue polypeptide: MDGALLIDKPKGITSTEVVERVKEKLKARKAGHTGTLDPIATGLLIILINKATRFSQFFIGMPKTYRFTVKFGAETDTYDAQGKVVETYEGELNCDKLKEVLNEFRGEILQTPPPFSAKKIKGRRAYELARKGKKVELKPVKITVYSLELLSCNPREKEAEFLAEISSGGYVRSLAYDIGKKLGIGGYMKELRRLKIDEISVEEAVSLEEFLSSENPEEYVLPVDTLFRVIPEVRLNTFEAGKILQGKRILIKNYDYEGLVKIYEDSKFIGIGELKGGVLSPKRLLV.

Catalysis depends on D38, which acts as the Nucleophile.

The protein belongs to the pseudouridine synthase TruB family. Type 1 subfamily.

It catalyses the reaction uridine(55) in tRNA = pseudouridine(55) in tRNA. Functionally, responsible for synthesis of pseudouridine from uracil-55 in the psi GC loop of transfer RNAs. This is tRNA pseudouridine synthase B from Aquifex aeolicus (strain VF5).